The following is a 285-amino-acid chain: Urease accessory protein UreD 1 (285 aa).

This sequence belongs to the UreD family. In terms of assembly, ureD, UreF and UreG form a complex that acts as a GTP-hydrolysis-dependent molecular chaperone, activating the urease apoprotein by helping to assemble the nickel containing metallocenter of UreC. The UreE protein probably delivers the nickel.

The protein localises to the cytoplasm. In terms of biological role, required for maturation of urease via the functional incorporation of the urease nickel metallocenter. This Pseudomonas syringae pv. syringae (strain B728a) protein is Urease accessory protein UreD 1.